A 647-amino-acid polypeptide reads, in one-letter code: Macrolide export ATP-binding/permease protein MacB 2 (647 aa).

The region spanning 6–244 is the ABC transporter domain; sequence IQLKGIERRY…VTPTAAPAGK (239 aa). 42–49 serves as a coordination point for ATP; sequence GASGSGKS. Positions 223-247 are disordered; it reads QEDSGRKPAAVPVTPTAAPAGKEGV. Positions 230–242 are enriched in low complexity; it reads PAAVPVTPTAAPA. Transmembrane regions (helical) follow at residues 273–293, 527–547, 581–601, and 610–630; these read FLTMLGIIIGIAAVVSVVALG, IAVISLIVGGVGVMNIMLVSV, LGGMLGVGVSLFIGLLFSLFV, and LFSILMAFGCSSLIGILFGYL.

It belongs to the ABC transporter superfamily. Macrolide exporter (TC 3.A.1.122) family. Homodimer. Part of the tripartite efflux system MacAB-TolC, which is composed of an inner membrane transporter, MacB, a periplasmic membrane fusion protein, MacA, and an outer membrane component, TolC. The complex forms a large protein conduit and can translocate molecules across both the inner and outer membranes. Interacts with MacA.

The protein localises to the cell inner membrane. Functionally, part of the tripartite efflux system MacAB-TolC. MacB is a non-canonical ABC transporter that contains transmembrane domains (TMD), which form a pore in the inner membrane, and an ATP-binding domain (NBD), which is responsible for energy generation. Confers resistance against macrolides. The chain is Macrolide export ATP-binding/permease protein MacB 2 from Aeromonas hydrophila subsp. hydrophila (strain ATCC 7966 / DSM 30187 / BCRC 13018 / CCUG 14551 / JCM 1027 / KCTC 2358 / NCIMB 9240 / NCTC 8049).